We begin with the raw amino-acid sequence, 155 residues long: Small ribosomal subunit protein uS17 (155 aa).

The protein belongs to the universal ribosomal protein uS17 family. Component of the small ribosomal subunit. Mature ribosomes consist of a small (40S) and a large (60S) subunit. The 40S subunit contains about 32 different proteins and 1 molecule of RNA (18S). The 60S subunit contains 45 different proteins and 3 molecules of RNA (25S, 5.8S and 5S).

Its subcellular location is the cytoplasm. Its function is as follows. Component of the ribosome, a large ribonucleoprotein complex responsible for the synthesis of proteins in the cell. The small ribosomal subunit (SSU) binds messenger RNAs (mRNAs) and translates the encoded message by selecting cognate aminoacyl-transfer RNA (tRNA) molecules. The large subunit (LSU) contains the ribosomal catalytic site termed the peptidyl transferase center (PTC), which catalyzes the formation of peptide bonds, thereby polymerizing the amino acids delivered by tRNAs into a polypeptide chain. The nascent polypeptides leave the ribosome through a tunnel in the LSU and interact with protein factors that function in enzymatic processing, targeting, and the membrane insertion of nascent chains at the exit of the ribosomal tunnel. The polypeptide is Small ribosomal subunit protein uS17 (Candida albicans (strain SC5314 / ATCC MYA-2876) (Yeast)).